A 155-amino-acid chain; its full sequence is MSRRGTAEEKTAKSDPIYRNRLVNMLVNRILKHGKKSLAYQIIYRAMKKIQQKTETNPLSVLRQAIRGVTPDIAVKARRVGGSTHQVPIEIGSTQGKALAIRWLLGASRKRPGRNMAFKLSSELVDAAKGSGDAIRKKEETHRMAEANRAFAHFR.

It belongs to the universal ribosomal protein uS7 family. As to quaternary structure, part of the 30S ribosomal subunit.

It localises to the plastid. It is found in the chloroplast. Functionally, one of the primary rRNA binding proteins, it binds directly to 16S rRNA where it nucleates assembly of the head domain of the 30S subunit. This Eucalyptus globulus subsp. globulus (Tasmanian blue gum) protein is Small ribosomal subunit protein uS7cz/uS7cy (rps7-A).